Here is a 92-residue protein sequence, read N- to C-terminus: SPbeta prophage-derived uncharacterized protein YoqM (92 aa).

The signal sequence occupies residues 1–25 (MKLRKVLTGSVLSLGLLVSASPAFA).

In Bacillus subtilis (strain 168), this protein is SPbeta prophage-derived uncharacterized protein YoqM (yoqM).